An 865-amino-acid polypeptide reads, in one-letter code: MSDTTAPAFDFQDREPFWQNEWKRRNTFAVPDVPPADRPKYYVLEMFPYPSGQLHVGHVRNYTLGDVVARYKRARGFAVMHPMGWDAFGLPAENAARERNVHPGKWTMDNIATMRGTLQRLGFSLDWDREIATCLPEYYGKQQKLFTDMLGAGLVERRDSLVNWDPVDETVLANEQVVDGRGWRSGALIEKKKLSQWFLKITKFAQPLLDDLKTLDRWPERVRTMQERWIGRSEGARVRFALHQPPAGYDEDLDSVEVFTTRPDTLFGLSFIGISAEHPLARKVAESNPQAAAFIEECRRLGTSEEVIEAAEKRGFDTGLRVANPLDPEKTAPVWIANFVLMDYGTGAVFGCPCGDQRDLDFARKYDLPVPQVLLPPGQDAETFVLGKKAVSGDATLFNSGFLDGLDPAAARTKVIERLEGLGAGKGVVNWRLRDWGISRQRYWGCPIPIIHCDTCGPVPVPDEQLPVILPEDVTFDRPGNPLDHHPTWKHVNCPHCGKPAVRETDTFDTFVDSSWYFARFTSPHAETPTVPAAANGWLPVDQYIGGIEHAILHLLYARFFTRAMHETGHLDVDEPFAGLFTQGMVTHESYRDDSGWLYPEEVERQGDQVVRRETGTPVQVGRSEKMSKSKRNTVSPVDIIERYGADTARWFVLSDSPPERDMEWTAAGVAAAARFGQRLHRLVASVAARDAADSAHGATGDDLRRVTHRTIAAVGEALEAFTPNVAVARLHELTSALADAERIEGAGIAAARREAARVLCLLTAPMMPHLAEDMMAVLEPGSALVVERPWPEAEEKWLAVQSVTIGVQILGKLRGTIEVPPNAPKEEVLAAAKSEPNVARLLEGKRLVKEIHVPNRIVNFVVAG.

The 'HIGH' region signature appears at 48 to 58; the sequence is PYPSGQLHVGH. The 'KMSKS' region signature appears at 626–630; that stretch reads KMSKS. Position 629 (Lys-629) interacts with ATP.

It belongs to the class-I aminoacyl-tRNA synthetase family.

It is found in the cytoplasm. It catalyses the reaction tRNA(Leu) + L-leucine + ATP = L-leucyl-tRNA(Leu) + AMP + diphosphate. In Gluconobacter oxydans (strain 621H) (Gluconobacter suboxydans), this protein is Leucine--tRNA ligase.